Consider the following 255-residue polypeptide: 1-(5-phosphoribosyl)-5-[(5-phosphoribosylamino)methylideneamino] imidazole-4-carboxamide isomerase (255 aa).

The active-site Proton acceptor is D8. The active-site Proton donor is the D129.

This sequence belongs to the HisA/HisF family.

The protein localises to the cytoplasm. It catalyses the reaction 1-(5-phospho-beta-D-ribosyl)-5-[(5-phospho-beta-D-ribosylamino)methylideneamino]imidazole-4-carboxamide = 5-[(5-phospho-1-deoxy-D-ribulos-1-ylimino)methylamino]-1-(5-phospho-beta-D-ribosyl)imidazole-4-carboxamide. It functions in the pathway amino-acid biosynthesis; L-histidine biosynthesis; L-histidine from 5-phospho-alpha-D-ribose 1-diphosphate: step 4/9. This Prochlorococcus marinus (strain MIT 9301) protein is 1-(5-phosphoribosyl)-5-[(5-phosphoribosylamino)methylideneamino] imidazole-4-carboxamide isomerase.